A 447-amino-acid polypeptide reads, in one-letter code: uncharacterized protein (447 aa).

The next 12 helical transmembrane spans lie at 17-37 (IMMM…SSSA), 40-60 (VAGP…LFIM), 95-115 (IYWK…AIFI), 118-138 (WLPG…VTIV), 154-174 (AMIK…LLFV), 200-220 (GLIT…IIGV), 243-263 (IVAF…WNQV), 289-311 (AVIL…RILY), 333-353 (MFAI…SLFA), 361-381 (LMGS…FAHL), 393-415 (YYVK…ILIG), and 419-441 (TTSI…AYLV).

Belongs to the amino acid-polyamine-organocation (APC) superfamily.

It is found in the cell membrane. May participate in leucine metabolism. May transport leucine or a compound related to leucine metabolism. This is an uncharacterized protein from Bacillus subtilis (strain 168).